The primary structure comprises 353 residues: Phenol hydroxylase P5 protein (353 aa).

The 2Fe-2S ferredoxin-type domain maps to 3–93 (YQVTIEPIGT…DMVIEADVDE (91 aa)). Positions 37, 42, 45, and 77 each coordinate [2Fe-2S] cluster. Residues 102-201 (VQDYQATVIE…SGPYGQFFVR (100 aa)) form the FAD-binding FR-type domain.

In terms of assembly, the multicomponent enzyme phenol hydroxylase is formed by P0, P1, P2, P3, P4 and P5 polypeptides. FAD serves as cofactor. [2Fe-2S] cluster is required as a cofactor.

The enzyme catalyses phenol + NADPH + O2 + H(+) = catechol + NADP(+) + H2O. It participates in aromatic compound metabolism; phenol degradation. Catabolizes phenol, and some of its methylated derivatives. P5 is required for growth on phenol, and for in vitro phenol hydroxylase activity. Functionally, probable electron transfer from NADPH, via FAD and the 2Fe-2S center, to the oxygenase activity site of the enzyme. The polypeptide is Phenol hydroxylase P5 protein (mphP) (Acinetobacter pittii (strain PHEA-2)).